Consider the following 221-residue polypeptide: Oxaloacetate tautomerase FAHD1, mitochondrial (221 aa).

A mitochondrion-targeting transit peptide spans 1 to 24 (MAASRPLSRFWEWGKNIVCVGRNY). Residue serine 37 is modified to Phosphoserine. Glutamate 68, glutamate 70, and aspartate 99 together coordinate Mg(2+). Lysine 110 is subject to N6-acetyllysine. Lysine 112 bears the N6-succinyllysine mark.

The protein belongs to the FAH family. Homodimer. Mg(2+) is required as a cofactor. The cofactor is Mn(2+).

The protein resides in the mitochondrion. It is found in the cytoplasm. The protein localises to the cytosol. The enzyme catalyses oxaloacetate = enol-oxaloacetate. It catalyses the reaction oxaloacetate + H(+) = pyruvate + CO2. The catalysed reaction is a 3-acylpyruvate + H2O = a carboxylate + pyruvate + H(+). It carries out the reaction acetylpyruvate + H2O = acetate + pyruvate + H(+). The enzyme catalyses 3-fumarylpyruvate + H2O = fumarate + pyruvate + H(+). Oxaloacetate decarboxylation is competitively inhibited by oxalate. Tautomerase that converts enol-oxaloacetate, a strong inhibitor of succinate dehydrogenase, to the physiological keto form of oxaloacetate. It is thereby required to maximize aerobic respiration efficiency by preventing succinate dehydrogenase inhibition. Also acts as a weak oxaloacetate decarboxylase (ODx), catalyzing the decarboxylation of oxaloacetate (OAA) to pyruvate and CO(2), and as such is likely a regulatory enzyme in the TCA cycle. Also displays acylpyruvase activity, being able to hydrolyze acetylpyruvate and fumarylpyruvate in vitro. This is Oxaloacetate tautomerase FAHD1, mitochondrial from Bos taurus (Bovine).